The sequence spans 170 residues: Adenine phosphoribosyltransferase (170 aa).

This sequence belongs to the purine/pyrimidine phosphoribosyltransferase family. In terms of assembly, homodimer.

Its subcellular location is the cytoplasm. The enzyme catalyses AMP + diphosphate = 5-phospho-alpha-D-ribose 1-diphosphate + adenine. It participates in purine metabolism; AMP biosynthesis via salvage pathway; AMP from adenine: step 1/1. Its function is as follows. Catalyzes a salvage reaction resulting in the formation of AMP, that is energically less costly than de novo synthesis. This Clostridioides difficile (strain 630) (Peptoclostridium difficile) protein is Adenine phosphoribosyltransferase.